The chain runs to 456 residues: Phosphomethylpyrimidine synthase (456 aa).

Residues N80, M109, Y139, H175, 195–197, 236–239, and E275 each bind substrate; these read SRG and DSLR. H279 lines the Zn(2+) pocket. Y302 lines the substrate pocket. Zn(2+) is bound at residue H343. Residues C423, C426, and C431 each coordinate [4Fe-4S] cluster.

This sequence belongs to the ThiC family. It depends on [4Fe-4S] cluster as a cofactor.

The catalysed reaction is 5-amino-1-(5-phospho-beta-D-ribosyl)imidazole + S-adenosyl-L-methionine = 4-amino-2-methyl-5-(phosphooxymethyl)pyrimidine + CO + 5'-deoxyadenosine + formate + L-methionine + 3 H(+). Its pathway is cofactor biosynthesis; thiamine diphosphate biosynthesis. In terms of biological role, catalyzes the synthesis of the hydroxymethylpyrimidine phosphate (HMP-P) moiety of thiamine from aminoimidazole ribotide (AIR) in a radical S-adenosyl-L-methionine (SAM)-dependent reaction. In Prochlorococcus marinus (strain MIT 9312), this protein is Phosphomethylpyrimidine synthase.